A 99-amino-acid chain; its full sequence is Putative membrane protein insertion efficiency factor (99 aa).

Belongs to the UPF0161 family.

It is found in the cell inner membrane. Its function is as follows. Could be involved in insertion of integral membrane proteins into the membrane. This chain is Putative membrane protein insertion efficiency factor, found in Salinibacter ruber (strain DSM 13855 / M31).